A 218-amino-acid chain; its full sequence is Probable GTP-binding protein EngB (218 aa).

An EngB-type G domain is found at 21 to 192 (NAPQIALAGR…WQELHRLAFP (172 aa)). GTP is bound by residues 29-36 (GRSNVGKS), 56-60 (GKTRS), 75-78 (DLPG), 142-145 (TKAD), and 171-173 (FSS). Mg(2+) contacts are provided by Ser-36 and Thr-58. The segment at 194-218 (MAFDTPSDGAPEPADEPEAASERAE) is disordered.

This sequence belongs to the TRAFAC class TrmE-Era-EngA-EngB-Septin-like GTPase superfamily. EngB GTPase family. Mg(2+) is required as a cofactor.

Necessary for normal cell division and for the maintenance of normal septation. The chain is Probable GTP-binding protein EngB from Oleidesulfovibrio alaskensis (strain ATCC BAA-1058 / DSM 17464 / G20) (Desulfovibrio alaskensis).